Reading from the N-terminus, the 99-residue chain is Acylphosphatase-2 (99 aa).

Serine 2 is modified (N-acetylserine). The region spanning 9–99 is the Acylphosphatase-like domain; it reads SVDYEVFGRV…LEYSSFNIRY (91 aa). Residues arginine 24 and asparagine 42 contribute to the active site. Serine 93 carries the post-translational modification Phosphoserine.

The protein belongs to the acylphosphatase family.

It catalyses the reaction an acyl phosphate + H2O = a carboxylate + phosphate + H(+). Its function is as follows. Its physiological role is not yet clear. This chain is Acylphosphatase-2 (ACYP2), found in Bos taurus (Bovine).